The sequence spans 37 residues: Large ribosomal subunit protein bL36c (37 aa).

Belongs to the bacterial ribosomal protein bL36 family.

The protein localises to the plastid. It localises to the chloroplast. The sequence is that of Large ribosomal subunit protein bL36c (rpl36) from Pisum sativum (Garden pea).